The primary structure comprises 102 residues: Small ribosomal subunit protein uS10 (102 aa).

This sequence belongs to the universal ribosomal protein uS10 family. In terms of assembly, part of the 30S ribosomal subunit.

Its function is as follows. Involved in the binding of tRNA to the ribosomes. The chain is Small ribosomal subunit protein uS10 from Citrifermentans bemidjiense (strain ATCC BAA-1014 / DSM 16622 / JCM 12645 / Bem) (Geobacter bemidjiensis).